The sequence spans 352 residues: D-alanine--D-alanine ligase (352 aa).

An ATP-grasp domain is found at 135–344 (KTVFAKAGLP…FPQLVDRLIE (210 aa)). ATP is bound at residue 171 to 226 (EETLNYPCFVKPANLGSSVGIAKVRSRSELEKALDQAASYDRRIIVEAGVIAREVE). Mg(2+) contacts are provided by aspartate 297, glutamate 311, and asparagine 313.

Belongs to the D-alanine--D-alanine ligase family. Mg(2+) is required as a cofactor. Requires Mn(2+) as cofactor.

It is found in the cytoplasm. The enzyme catalyses 2 D-alanine + ATP = D-alanyl-D-alanine + ADP + phosphate + H(+). The protein operates within cell wall biogenesis; peptidoglycan biosynthesis. In terms of biological role, cell wall formation. This Gloeothece citriformis (strain PCC 7424) (Cyanothece sp. (strain PCC 7424)) protein is D-alanine--D-alanine ligase.